The primary structure comprises 418 residues: FAD-dependent monooxygenase fmqB (418 aa).

FAD-binding residues include valine 12 and arginine 68. The active site involves arginine 147. Residues aspartate 272 and glycine 285 each contribute to the FAD site.

Belongs to the paxM FAD-dependent monooxygenase family.

It localises to the cytoplasm. The protein operates within alkaloid biosynthesis. Functionally, FAD-dependent monooxygenase; part of the gene cluster that mediates the biosynthesis of the antitumor fumiquinazolines that confer a dual-usage capability to defend against phagocytes in the environment and animal hosts. The simplest member is fumiquinazoline F (FQF) with a 6-6-6 tricyclic core derived from anthranilic acid (Ant), tryptophan (Trp), and alanine (Ala). The trimodular NRPS fmqA is responsible for FQF formation. Modules 1, 2 and 3 of fmqA are predicted to activate and load Ant, Trp and Ala, respectively, providing for the assembly of an Ant-Trp-Ala-S-enzyme intermediate that would undergo double cyclization for chain release and generation of the tricyclic 6-6-6 product fumiquinazoline F. The presence of an E domain predicted for module 2 of fmqA is consistent with epimerization of L-Trp to D-Trp during assembly to generate the R-stereocenter at C14 of FQF. The FAD-dependent monooxygenase fmqB and the monomodular NRPS fmqC then maturate FQF to FQA. FmqB oxidizes the 2',3'-double bond of the indole side chain of FQF, and fmqC activates L-Ala as the adenylate, installs it as the pantetheinyl thioester on its carrier protein domain, and acylates the oxidized indole for subsequent intramolecular cyclization to create the 6-5-5-imidazolindolone of FQA. The FAD-linked oxidoreductase fmqD introduces a third layer of scaffold complexity by converting FQA to the spirohemiaminal FQC, presumably by catalyzing the formation of a transient imine within the pyrazinone ring. FQC subsequently converts nonenzymatically to the known cyclic aminal FQD. This chain is FAD-dependent monooxygenase fmqB, found in Aspergillus fumigatus (strain ATCC MYA-4609 / CBS 101355 / FGSC A1100 / Af293) (Neosartorya fumigata).